Here is a 312-residue protein sequence, read N- to C-terminus: Phosphoribosylaminoimidazole-succinocarboxamide synthase (312 aa).

It belongs to the SAICAR synthetase family.

It carries out the reaction 5-amino-1-(5-phospho-D-ribosyl)imidazole-4-carboxylate + L-aspartate + ATP = (2S)-2-[5-amino-1-(5-phospho-beta-D-ribosyl)imidazole-4-carboxamido]succinate + ADP + phosphate + 2 H(+). Its pathway is purine metabolism; IMP biosynthesis via de novo pathway; 5-amino-1-(5-phospho-D-ribosyl)imidazole-4-carboxamide from 5-amino-1-(5-phospho-D-ribosyl)imidazole-4-carboxylate: step 1/2. This chain is Phosphoribosylaminoimidazole-succinocarboxamide synthase, found in Legionella pneumophila (strain Lens).